The sequence spans 300 residues: Cholesterol 25-hydroxylase-like protein (300 aa).

N-linked (GlcNAc...) asparagine glycosylation occurs at N9. 3 consecutive transmembrane segments (helical) span residues 54–73 (YTWV…VPFF), 95–115 (LQGW…LIWV), and 130–152 (MLSQ…HYIN). Residues 135 to 266 (AIFFLAFDFT…WFNYLDRLMG (132 aa)) form the Fatty acid hydroxylase domain. A Histidine box-1 motif is present at residues 148–152 (FHYIN). The Histidine box-2 signature appears at 163–167 (HSVHH). A helical transmembrane segment spans residues 192 to 212 (ITTIPWIFPTHCLTYWIWFFI). The Histidine box-3 motif lies at 242-248 (AHDMHHL).

The protein belongs to the sterol desaturase family. Fe cation is required as a cofactor.

Its subcellular location is the membrane. In terms of biological role, probable sterol desaturase. The protein is Cholesterol 25-hydroxylase-like protein of Caenorhabditis elegans.